A 334-amino-acid chain; its full sequence is Beta-ketoacyl-[acyl-carrier-protein] synthase III (334 aa).

Residues cysteine 116 and histidine 256 contribute to the active site. The ACP-binding stretch occupies residues 257–261 (QANLR). The active site involves asparagine 286.

This sequence belongs to the thiolase-like superfamily. FabH family. Homodimer.

It is found in the cytoplasm. It catalyses the reaction malonyl-[ACP] + acetyl-CoA + H(+) = 3-oxobutanoyl-[ACP] + CO2 + CoA. It functions in the pathway lipid metabolism; fatty acid biosynthesis. Its function is as follows. Catalyzes the condensation reaction of fatty acid synthesis by the addition to an acyl acceptor of two carbons from malonyl-ACP. Catalyzes the first condensation reaction which initiates fatty acid synthesis and may therefore play a role in governing the total rate of fatty acid production. Possesses both acetoacetyl-ACP synthase and acetyl transacylase activities. Its substrate specificity determines the biosynthesis of branched-chain and/or straight-chain of fatty acids. The protein is Beta-ketoacyl-[acyl-carrier-protein] synthase III of Phocaeicola vulgatus (strain ATCC 8482 / DSM 1447 / JCM 5826 / CCUG 4940 / NBRC 14291 / NCTC 11154) (Bacteroides vulgatus).